The chain runs to 339 residues: Anthranilate phosphoribosyltransferase (339 aa).

5-phospho-alpha-D-ribose 1-diphosphate contacts are provided by residues Gly81, 84 to 85 (GD), Ser89, 91 to 94 (NVSS), 109 to 117 (KHGNRALSS), and Ala121. Residue Gly81 coordinates anthranilate. A Mg(2+)-binding site is contributed by Ser93. Asn112 is an anthranilate binding site. Arg167 lines the anthranilate pocket. 2 residues coordinate Mg(2+): Asp225 and Glu226.

It belongs to the anthranilate phosphoribosyltransferase family. Homodimer. Mg(2+) is required as a cofactor.

It catalyses the reaction N-(5-phospho-beta-D-ribosyl)anthranilate + diphosphate = 5-phospho-alpha-D-ribose 1-diphosphate + anthranilate. Its pathway is amino-acid biosynthesis; L-tryptophan biosynthesis; L-tryptophan from chorismate: step 2/5. Its function is as follows. Catalyzes the transfer of the phosphoribosyl group of 5-phosphorylribose-1-pyrophosphate (PRPP) to anthranilate to yield N-(5'-phosphoribosyl)-anthranilate (PRA). In Brucella ovis (strain ATCC 25840 / 63/290 / NCTC 10512), this protein is Anthranilate phosphoribosyltransferase.